The following is a 192-amino-acid chain: Imidazoleglycerol-phosphate dehydratase (192 aa).

It belongs to the imidazoleglycerol-phosphate dehydratase family.

It localises to the cytoplasm. The enzyme catalyses D-erythro-1-(imidazol-4-yl)glycerol 3-phosphate = 3-(imidazol-4-yl)-2-oxopropyl phosphate + H2O. It participates in amino-acid biosynthesis; L-histidine biosynthesis; L-histidine from 5-phospho-alpha-D-ribose 1-diphosphate: step 6/9. This is Imidazoleglycerol-phosphate dehydratase from Staphylococcus aureus (strain JH9).